Here is a 593-residue protein sequence, read N- to C-terminus: Tyrosine-protein phosphatase non-receptor type 11 (593 aa).

T2 is modified (N-acetylthreonine). 2 consecutive SH2 domains span residues W6–L102 and W112–L216. Residues Y62 and Y66 each carry the phosphotyrosine modification. The 271-residue stretch at F247–A517 folds into the Tyrosine-protein phosphatase domain. Substrate contacts are provided by residues D425, C459–R465, and Q506. C459 (phosphocysteine intermediate) is an active-site residue. Phosphotyrosine; by PDGFR is present on residues Y542 and Y580.

Belongs to the protein-tyrosine phosphatase family. Non-receptor class 2 subfamily. As to quaternary structure, interacts with phosphorylated SIT1, LIME1, BCAR3 and MZPL1. Interacts with FCRL4, FCRL6, ANKHD1, SHB, INPP5D/SHIP1 and CD84. Interacts with MILR1 (tyrosine-phosphorylated). Interacts with FLT1 (tyrosine-phosphorylated), FLT3 (tyrosine-phosphorylated), FLT4 (tyrosine-phosphorylated), KIT and GRB2. Interacts with PTPNS1. Interacts with KIR2DL1; the interaction is enhanced by ARRB2. Interacts (via SH2 domain) with TEK/TIE2 (tyrosine phosphorylated). Interacts with GAB2. Interacts with TERT; the interaction retains TERT in the nucleus. Interacts with PECAM1 and FER. Interacts with EPHA2 (activated); participates in PTK2/FAK1 dephosphorylation in EPHA2 downstream signaling. Interacts with PDGFRA (tyrosine phosphorylated). Interacts with PDGFRB (tyrosine phosphorylated); this interaction increases the PTPN11 phosphatase activity. Interacts with ROS1; this mediates PTPN11 phosphorylation. Interacts with CEACAM1 (via cytoplasmic domain); this interaction depends on the monomer/dimer equilibrium and is phosphorylation-dependent. Interacts with MPIG6B (via ITIM motif). Interacts with SIGLEC10. Interacts with CLEC12B (via ITIM motif); this interaction triggers dephosphorylation and activation of PTPN11. Interacts (via SH2 domains) with NEDD9/CAS-L; the interaction is enhanced when NEDD9/CAS-L is tyrosine phosphorylated. Phosphorylated on Tyr-542 and Tyr-580 upon receptor protein tyrosine kinase activation; which creates a binding site for GRB2 and other SH2-containing proteins. Phosphorylated upon activation of the receptor-type kinase FLT3. Phosphorylated upon activation of the receptor-type kinase PDGFRA. Phosphorylated by activated PDGFRB. As to expression, expressed in brain, muscle and lung.

It is found in the cytoplasm. It carries out the reaction O-phospho-L-tyrosyl-[protein] + H2O = L-tyrosyl-[protein] + phosphate. Its activity is regulated as follows. Inhibited by orthovanadate, molybdate and spermidine. Functionally, acts downstream of various receptor and cytoplasmic protein tyrosine kinases to participate in the signal transduction from the cell surface to the nucleus. Positively regulates MAPK signal transduction pathway. Dephosphorylates GAB1, ARHGAP35 and EGFR. Dephosphorylates ROCK2 at 'Tyr-722' resulting in stimulation of its RhoA binding activity. Dephosphorylates CDC73. Dephosphorylates SOX9 on tyrosine residues, leading to inactivate SOX9 and promote ossification. Dephosphorylates tyrosine-phosphorylated NEDD9/CAS-L. This Rattus norvegicus (Rat) protein is Tyrosine-protein phosphatase non-receptor type 11 (Ptpn11).